An 873-amino-acid chain; its full sequence is Potassium voltage-gated channel subfamily KQT member 3 (873 aa).

Residues 1–41 (MGLKARRAAGAAGGGGGEGGGGGGGAANPAGGDSAVAGDEE) form a disordered region. The Cytoplasmic portion of the chain corresponds to 1 to 121 (MGLKARRAAG…IYDALERPRG (121 aa)). The segment covering 11 to 26 (AAGGGGGEGGGGGGGA) has biased composition (gly residues). Thr82 is modified (phosphothreonine). Residues 122–144 (WALLYHALVFLIVLGCLILAVLT) traverse the membrane as a helical segment. Residues 145–154 (TFKEYETVSG) lie on the Extracellular side of the membrane. Residues 155 to 176 (DWLLLLETFAIFIFGAEFALRI) traverse the membrane as a helical segment. At 177-194 (WAAGCCCRYKGWRGRLKF) the chain is on the cytoplasmic side. The helical transmembrane segment at 195 to 214 (ARKPLCMLDIFVLIASVPVV) threads the bilayer. Topologically, residues 215–226 (AVGNQGNVLATS) are extracellular. A helical; Voltage-sensor transmembrane segment spans residues 227 to 245 (LRSLRFLQILRMLRMDRRG). Arg244 contributes to the a 1,2-diacyl-sn-glycero-3-phospho-(1D-myo-inositol-4,5-bisphosphate) binding site. Over 246–257 (GTWKLLGSAICA) the chain is Cytoplasmic. Residues 258–283 (HSKELITAWYIGFLTLILSSFLVYLV) traverse the membrane as a helical segment. An a 1,2-diacyl-sn-glycero-3-phospho-(1D-myo-inositol-4,5-bisphosphate)-binding site is contributed by Lys260. Over 284–303 (EKDVPEMDAQGEEMKEEFET) the chain is Extracellular. Positions 304–316 (YADALWWGLITLA) form an intramembrane region, pore-forming. Residues 317–322 (TIGYGD) carry the Selectivity filter motif. Topologically, residues 317–327 (TIGYGDKTPKT) are extracellular. Residues 328–354 (WEGRLIAATFSLIGVSFFALPAGILGS) traverse the membrane as a helical segment. At 355-873 (GLALKVQEQH…SIWTPSNKPT (519 aa)) the chain is on the cytoplasmic side. A mediates interaction with calmodulin region spans residues 357-538 (ALKVQEQHRQ…RLYKKKFKET (182 aa)). Lys367 contacts a 1,2-diacyl-sn-glycero-3-phospho-(1D-myo-inositol-4,5-bisphosphate). Disordered stretches follow at residues 575-603 (PGPP…PRNE), 723-742 (RGGP…GSTY), and 766-873 (ELQG…NKPT). 3 stretches are compositionally biased toward polar residues: residues 588–601 (KGSA…QSPR), 725–741 (GPSS…SGST), and 844–873 (DPFT…NKPT).

The protein belongs to the potassium channel family. KQT (TC 1.A.1.15) subfamily. Kv7.3/KCNQ3 sub-subfamily. In terms of assembly, heterotetramer with KCNQ2; forms heterotetrameric M-channel responsible for the native M-current. Interacts with calmodulin; the interaction is calcium-independent, constitutive and participates in the proper assembly of a functional M-channel. Heteromultimer with KCNQ5. May associate with KCNE2. Interacts with IQCJ-SCHIP1. Interacts (via the pore module) with SLC5A3/SMIT1; forms a coregulatory complex that alters ion selectivity, voltage dependence and gating kinetics of the channel. Post-translationally, KCNQ2/KCNQ3 are ubiquitinated by NEDD4L. Ubiquitination leads to protein degradation. Degradation induced by NEDD4L is inhibited by USP36. In terms of tissue distribution, expressed in brain and sympathetic ganglia. In brain, expressed in cortex, hippocampus and at much lower levels in cerebellum. In sympathetic ganglia, expressed at approximately equal levels in both superior cervical ganglia and prevertebral ganglia.

Its subcellular location is the cell membrane. The enzyme catalyses K(+)(in) = K(+)(out). The catalysed reaction is Rb(+)(in) = Rb(+)(out). It carries out the reaction Cs(+)(in) = Cs(+)(out). It catalyses the reaction Na(+)(in) = Na(+)(out). With respect to regulation, phosphatidylinositol-4,5-bisphosphate (PIP2) potentiates the activation of KCNQ channels by enhancing the electro-mechanical coupling of the voltage-sensing domain (VSD) and the pore-forming domain (PD). In the closed state of the channel, PIP2 is anchored at the S2-S3 loop; upon channel activation, PIP2 interacts with the S4-S5 linker and is involved in channel gating. Calcium suppresses KCNQ2-KCNQ3 channel currents, with calcium-bound calmodulin inducing a change in channel configuration which leads to the reduction of channel affinity for PIP2 and subsequent current suppression. M-channel is blocked by XE991. In terms of biological role, pore-forming subunit of the voltage-gated potassium (Kv) M-channel which is responsible for the M-current, a key controller of neuronal excitability. M-channel is composed of pore-forming subunits KCNQ2 and KCNQ3 assembled as heterotetramers, each subunit containing a voltage sensing domain (VSD) and a pore-forming domain (PD). The native M-current has a slowly activating and deactivating potassium conductance which plays a critical role in determining the subthreshold electrical excitability of neurons as well as the responsiveness to synaptic inputs. M-channel is selectively permeable in vitro to other cations besides potassium, in decreasing order of affinity K(+) &gt; Rb(+) &gt; Cs(+) &gt; Na(+). M-channel association with SLC5A3/SMIT1 alters channel ion selectivity, increasing Na(+) and Cs(+) permeation relative to K(+). Suppressed by activation of M1 muscarinic acetylcholine receptors. KCNQ3 also associates with KCNQ5 to form a functional channel in vitro and may also contribute to the M-current in brain. The protein is Potassium voltage-gated channel subfamily KQT member 3 of Rattus norvegicus (Rat).